Reading from the N-terminus, the 40-residue chain is Cytolysin EnT (40 aa).

Positions 3 to 12 are plays an important role in the hemolytic activity; the sequence is ALAGTIIEGA. Residues 11–30 are N-terminal region; that stretch reads GASLTFSVLTTILDALGSVS.

The protein belongs to the actinoporin family. Sea anemone subfamily. Octamer or nonamer in membranes. Monomer in the soluble state.

The protein resides in the secreted. The protein localises to the nematocyst. It localises to the target cell membrane. Pore-forming protein that forms cations-selective hydrophilic pores of around 1 nm and causes cytolysis. Pore formation is a multi-step process that involves specific recognition of membrane sphingomyelin (but neither cholesterol nor phosphatidylcholine) using aromatic rich region and adjacent phosphocholine (POC) binding site, firm binding to the membrane (mainly driven by hydrophobic interactions) accompanied by the transfer of the N-terminal region to the lipid-water interface and finally pore formation after oligomerization of monomers. This toxin shows hemolytic activities. This chain is Cytolysin EnT, found in Entacmaea quadricolor (Bubble-tip anemone).